A 512-amino-acid chain; its full sequence is MSNILILDFGSQYTNVLAKKIRLLSVFCEVLTWNTPLEKILQISPSGLIFSGGPHSVYQENSPKVDKEIYNSNIPILGVCYGMQLIARDFGSEVQGGKSEFGYTPIVFYPSELFKGLVDQDAFHTEIRMSHCDSVVIPPKDFFVIASSQHCPIAAIECPEKKLFGLQFHPEVSDSQAVGDKILSNFVKHICQASETWKIETIEKQLIQSIKEKVGETERVLLGLSGGVDSSVLAVLLHNALGDRLSCVFVDTGLLRKNEVEEVKQQFSSLGLEILVVDASEKFFHDLSGIEDPEQKRKVIGAAFIEVFDEVSRNLDVQWLAQGTIYSDVIESAKSCDATQVIKSHHNVGGLPEKLNLKLLEPLRFLFKDEVRALGKVLGLPDVLISRHPFPGPGLGVRVLGEVRREYVEIVKNADSIFIEELKKANLYHKVSQAFAVFLPCKSVAVKGDCRHYGYTIALRAIESTDFMTACWPSLSREFLNRCSSRIINEIPEVCRVVYDISDKPPATIEWE.

Residues 3–196 (NILILDFGSQ…VKHICQASET (194 aa)) form the Glutamine amidotransferase type-1 domain. The active-site Nucleophile is cysteine 80. Active-site residues include histidine 169 and glutamate 171. The region spanning 197-387 (WKIETIEKQL…LGLPDVLISR (191 aa)) is the GMPS ATP-PPase domain. Residue 225-231 (SGGVDSS) coordinates ATP.

In terms of assembly, homodimer.

The catalysed reaction is XMP + L-glutamine + ATP + H2O = GMP + L-glutamate + AMP + diphosphate + 2 H(+). The protein operates within purine metabolism; GMP biosynthesis; GMP from XMP (L-Gln route): step 1/1. Its function is as follows. Catalyzes the synthesis of GMP from XMP. The polypeptide is GMP synthase [glutamine-hydrolyzing] (Chlamydia caviae (strain ATCC VR-813 / DSM 19441 / 03DC25 / GPIC) (Chlamydophila caviae)).